Consider the following 585-residue polypeptide: Arginine--tRNA ligase (585 aa).

The short motif at 131-141 is the 'HIGH' region element; that stretch reads ANPTGPMHVGH.

It belongs to the class-I aminoacyl-tRNA synthetase family. In terms of assembly, monomer.

It is found in the cytoplasm. It catalyses the reaction tRNA(Arg) + L-arginine + ATP = L-arginyl-tRNA(Arg) + AMP + diphosphate. This is Arginine--tRNA ligase from Brucella abortus (strain S19).